Reading from the N-terminus, the 303-residue chain is N-acetyl-D-glucosamine kinase (303 aa).

ATP contacts are provided by residues 4 to 11 (GFDIGGTK) and 133 to 140 (GVGGGLVL). Residues H157, C177, C179, and C184 each coordinate Zn(2+).

The protein belongs to the ROK (NagC/XylR) family. NagK subfamily.

It catalyses the reaction N-acetyl-D-glucosamine + ATP = N-acetyl-D-glucosamine 6-phosphate + ADP + H(+). It participates in cell wall biogenesis; peptidoglycan recycling. Its function is as follows. Catalyzes the phosphorylation of N-acetyl-D-glucosamine (GlcNAc) derived from cell-wall degradation, yielding GlcNAc-6-P. The sequence is that of N-acetyl-D-glucosamine kinase from Citrobacter koseri (strain ATCC BAA-895 / CDC 4225-83 / SGSC4696).